The chain runs to 487 residues: ATP synthase subunit beta (487 aa).

Position 164 to 171 (164 to 171 (GGAGVGKT)) interacts with ATP.

The protein belongs to the ATPase alpha/beta chains family. In terms of assembly, F-type ATPases have 2 components, CF(1) - the catalytic core - and CF(0) - the membrane proton channel. CF(1) has five subunits: alpha(3), beta(3), gamma(1), delta(1), epsilon(1). CF(0) has four main subunits: a(1), b(1), b'(1) and c(9-12).

It localises to the cellular thylakoid membrane. It catalyses the reaction ATP + H2O + 4 H(+)(in) = ADP + phosphate + 5 H(+)(out). Produces ATP from ADP in the presence of a proton gradient across the membrane. The catalytic sites are hosted primarily by the beta subunits. This chain is ATP synthase subunit beta, found in Synechococcus sp. (strain CC9311).